The following is a 742-amino-acid chain: G2/M phase-specific E3 ubiquitin-protein ligase (742 aa).

The C2HC pre-PHD-type zinc finger occupies serine 10–isoleucine 50. A PHD-type 1 zinc finger spans residues leucine 78–lysine 127. The PHD-type 2; degenerate zinc finger occupies glutamine 142–asparagine 192. The PHD-type 3 zinc-finger motif lies at arginine 236–arginine 285. An HECT domain is found at lysine 417–glutamate 742.

The protein resides in the nucleus. The protein localises to the nucleolus. It is found in the cytoplasm. The catalysed reaction is S-ubiquitinyl-[E2 ubiquitin-conjugating enzyme]-L-cysteine + [acceptor protein]-L-lysine = [E2 ubiquitin-conjugating enzyme]-L-cysteine + N(6)-ubiquitinyl-[acceptor protein]-L-lysine.. It functions in the pathway protein modification; protein ubiquitination. In terms of biological role, E3 ubiquitin-protein ligase which accepts ubiquitin from an E2 ubiquitin-conjugating enzyme in the form of a thioester and then directly transfers the ubiquitin to targeted substrates. Essential in early embryonic development to prevent apoptotic death. This chain is G2/M phase-specific E3 ubiquitin-protein ligase (G2E3), found in Gallus gallus (Chicken).